Consider the following 187-residue polypeptide: Ubiquinone biosynthesis protein COQ4 homolog, mitochondrial (187 aa).

Zn(2+)-binding residues include H77, D78, H81, and E93.

This sequence belongs to the COQ4 family. In terms of assembly, component of a multi-subunit COQ enzyme complex. It depends on Zn(2+) as a cofactor.

Its subcellular location is the mitochondrion inner membrane. It catalyses the reaction a 4-hydroxy-3-methoxy-5-(all-trans-polyprenyl)benzoate + H(+) = a 2-methoxy-6-(all-trans-polyprenyl)phenol + CO2. It participates in cofactor biosynthesis; ubiquinone biosynthesis. Lyase that catalyzes the C1-decarboxylation of 4-hydroxy-3-methoxy-5-(all-trans-polyprenyl)benzoic acid into 2-methoxy-6-(all-trans-polyprenyl)phenol during ubiquinone biosynthesis. The sequence is that of Ubiquinone biosynthesis protein COQ4 homolog, mitochondrial from Leishmania major.